Reading from the N-terminus, the 154-residue chain is Ribonuclease 1 (154 aa).

This sequence belongs to the BetVI family.

The protein resides in the cytoplasm. Functionally, catalyzes the two-stage endonucleolytic cleavage to 3'-phosphomononucleotides and 3'-phosphooligonucleotides with 2',3'-cyclic phosphate intermediates. This Panax ginseng (Korean ginseng) protein is Ribonuclease 1.